The primary structure comprises 305 residues: Protein FdhE homolog (305 aa).

It belongs to the FdhE family.

It localises to the cytoplasm. In terms of biological role, necessary for formate dehydrogenase activity. The chain is Protein FdhE homolog from Stutzerimonas stutzeri (strain A1501) (Pseudomonas stutzeri).